A 93-amino-acid chain; its full sequence is Large ribosomal subunit protein uL23cz/uL23cy (93 aa).

Belongs to the universal ribosomal protein uL23 family. Part of the 50S ribosomal subunit.

It is found in the plastid. The protein localises to the chloroplast. Its function is as follows. Binds to 23S rRNA. The protein is Large ribosomal subunit protein uL23cz/uL23cy (rpl23-A) of Platanus occidentalis (Sycamore).